The chain runs to 522 residues: 2-isopropylmalate synthase (522 aa).

In terms of domain architecture, Pyruvate carboxyltransferase spans 5-267 (VIIFDTTLRD…ETGINAKEIH (263 aa)). The Mn(2+) site is built by aspartate 14, histidine 202, histidine 204, and asparagine 238. Residues 392–522 (QLQQLVVQSD…MHKNRELGGV (131 aa)) form a regulatory domain region.

Belongs to the alpha-IPM synthase/homocitrate synthase family. LeuA type 1 subfamily. In terms of assembly, homodimer. Mn(2+) serves as cofactor.

It is found in the cytoplasm. It carries out the reaction 3-methyl-2-oxobutanoate + acetyl-CoA + H2O = (2S)-2-isopropylmalate + CoA + H(+). It functions in the pathway amino-acid biosynthesis; L-leucine biosynthesis; L-leucine from 3-methyl-2-oxobutanoate: step 1/4. Its function is as follows. Catalyzes the condensation of the acetyl group of acetyl-CoA with 3-methyl-2-oxobutanoate (2-ketoisovalerate) to form 3-carboxy-3-hydroxy-4-methylpentanoate (2-isopropylmalate). This Shewanella sp. (strain MR-4) protein is 2-isopropylmalate synthase.